A 119-amino-acid chain; its full sequence is Methylglyoxal synthase (119 aa).

The 119-residue stretch at 1–119 (MRIALIAHDK…GTADLIIKQF (119 aa)) folds into the MGS-like domain. Residues histidine 8, lysine 12, 34–37 (TGTT), and 54–55 (SG) each bind substrate. Aspartate 60 acts as the Proton donor/acceptor in catalysis. Histidine 87 is a binding site for substrate.

The protein belongs to the methylglyoxal synthase family.

It carries out the reaction dihydroxyacetone phosphate = methylglyoxal + phosphate. Functionally, catalyzes the formation of methylglyoxal from dihydroxyacetone phosphate. In Clostridium botulinum (strain Eklund 17B / Type B), this protein is Methylglyoxal synthase.